The chain runs to 620 residues: MGRSKKRSRASSSRLNPLRKAGSNDNNKDTNVVNKKLQPLLQNLSSVVPNDRSIALSSISVLCEDAHMRQLLLKEKLVPIILNKLLNDSNSDIVVESFGLLRNLSLEEGYDVSIYLWRSDIWTSITSNFGRIVESLSALQAAEQQPQLKPAGKSKIESKRLLFDFADNLLSLVVALSNGSDDILNEILTESKINEIFQVISQLLKYGVEKLPINLFNTTLDLIYDLSSESFEFIDHVSNNELLSQFLNGLSPALHPQANELTKVLIEGIHCQFLDMKITYDQCNKMIHSVCHSINNIDPVQLVNDINNPVEIGPATSKDESSKVITKIKDYNAKRNESMIKLQSIEIAIDLITAIIEIVASKYESPESQEVAIPEELINTLTNFLPHVFMILKDTFTSRILIGWNNLIWLFVSLSLTELSGELLTTLWSYVTQLDSQDDLSIKIGRMGCIWALLKLIFPDGAFESENRALINVQMLNNSGFARGIIEEFQNNNDLELQQKCINVLSTYAMIQGQIDANKEIGQFFIQTLTQLNVRPEILIEMTNSLFQIYGDASYDYNEPIFVRGGFLSILKDQVVPNLRQQFKMVDKNKNPELKERCHDCFTTLDSFIHYKMNENSTNQ.

The segment at 1-32 (MGRSKKRSRASSSRLNPLRKAGSNDNNKDTNV) is disordered. ARM repeat units lie at residues 25 to 64 (DNNKDTNVVNKKLQPLLQNLSSVVPNDRSIALSSISVLCE), 66 to 106 (AHMR…NLSL), 181 to 221 (DDIL…TTLD), 258 to 299 (ANEL…NIDP), 340 to 386 (IKLQ…NFLP), 435 to 470 (DSQDDLSIKIGRMGCIWALLKLIFPDGAFESENRAL), 471 to 510 (INVQMLNNSGFARGIIEEFQNNNDLELQQKCINVLSTYAM), and 564 to 607 (RGGF…TLDS).

It belongs to the nuclear import and ribosome assembly adapter family. As to quaternary structure, forms a heterotrimeric complex with RPL5 and RPL11A or RPL11B; interaction of this complex with KAP104 allows the nuclear import of the heterotrimer. Component of a hexameric 5S RNP precursor complex, composed of 5S RNA, RRS1, RPF2, RPL5, RPL11A/RPL11B and SYO1; this complex acts as a precursor for ribosome assembly.

It is found in the cytoplasm. The protein resides in the nucleus. Its function is as follows. Nuclear import adapter that specifically recruits the two functionally and topologically linked ribosomal proteins RPL5 and RPL11 (encoded by RPL11A and RPL11B). Guarantees that this cargo pair remains bound together from the time of synthesis in the cytoplasm until delivery to the nascent 5S rRNA in the nucleus. This is Synchronized import protein 1 (SYO1) from Saccharomyces cerevisiae (strain ATCC 204508 / S288c) (Baker's yeast).